We begin with the raw amino-acid sequence, 146 residues long: VEWTDFERATIKDIFSKIEYEVVGPAALARCLVVYPWTQRYFGKFGNLYNAEAITGNPMISKHGTTILHGLDRAVKNMDDIKNTYAELSVLHSETLHVDPDNFKLLSDCLTIVVAGQLGKDFTGEVQAAFQKFLAVVVSSLGRQYH.

One can recognise a Globin domain in the interval E2–H146. H63 and H92 together coordinate heme b.

It belongs to the globin family. As to quaternary structure, hb2 is a heterotetramer of two alpha chains and two beta-2 chains. Red blood cells.

Its function is as follows. Involved in oxygen transport from gills to the various peripheral tissues. The sequence is that of Hemoglobin subunit beta-2 (hbb2) from Pseudaphritis urvillii (Congolli).